The chain runs to 339 residues: Mitogen-activated protein kinase kinase kinase 18 (339 aa).

Residues 3–263 (WTRGKTLGRG…ASQLLNHPFL (261 aa)) enclose the Protein kinase domain. ATP is bound by residues 9-17 (LGRGSTATV) and K32. D131 acts as the Proton acceptor in catalysis. A Phosphoserine modification is found at S301.

This sequence belongs to the protein kinase superfamily. Ser/Thr protein kinase family. In terms of assembly, interacts with ABI1. Binds to MKK3. Associates with SRK2E within the nucleus. Post-translationally, autophosphorylated. Unstable protein degraded by the proteasome pathway; this degradation is promoted by ABI1, but blocked by ABA. Expressed in roots, leaves and flowers.

It is found in the nucleus. The catalysed reaction is L-seryl-[protein] + ATP = O-phospho-L-seryl-[protein] + ADP + H(+). It carries out the reaction L-threonyl-[protein] + ATP = O-phospho-L-threonyl-[protein] + ADP + H(+). Kinase activity is activated by abscisic acid (ABA). Inhibited by ABI1. Activated by SRK2E. Its function is as follows. Component of the abscisic acid (ABA) signaling pathway that acts as ABA signal transducer in the context of abiotic stresses. Triggers MPK1, MPK2, MPK7 and MPK14 activation in a MKK3-dependent manner and MPK6 activation in a MKK3-independent manner. Mediates the ABA-dependent activation of the MKK3-MPK7 module. Positive regulator of ABA responses leading to the induction of gene expression (e.g. RD29B and RAB18) and involved in various responses including stomatal development, stomatal movement, inhibition of germination and root growth. Promotes leaf senescence. The protein is Mitogen-activated protein kinase kinase kinase 18 of Arabidopsis thaliana (Mouse-ear cress).